Consider the following 158-residue polypeptide: SsrA-binding protein (158 aa).

This sequence belongs to the SmpB family.

Its subcellular location is the cytoplasm. In terms of biological role, required for rescue of stalled ribosomes mediated by trans-translation. Binds to transfer-messenger RNA (tmRNA), required for stable association of tmRNA with ribosomes. tmRNA and SmpB together mimic tRNA shape, replacing the anticodon stem-loop with SmpB. tmRNA is encoded by the ssrA gene; the 2 termini fold to resemble tRNA(Ala) and it encodes a 'tag peptide', a short internal open reading frame. During trans-translation Ala-aminoacylated tmRNA acts like a tRNA, entering the A-site of stalled ribosomes, displacing the stalled mRNA. The ribosome then switches to translate the ORF on the tmRNA; the nascent peptide is terminated with the 'tag peptide' encoded by the tmRNA and targeted for degradation. The ribosome is freed to recommence translation, which seems to be the essential function of trans-translation. The chain is SsrA-binding protein from Bartonella quintana (strain Toulouse) (Rochalimaea quintana).